The following is a 787-amino-acid chain: Formate acetyltransferase (787 aa).

Residues 8–629 (NIFEQAWDGF…GNSPVHKGVF (622 aa)) enclose the PFL domain. The active-site S-acetylcysteine intermediate is Cys416. The active-site Cysteine radical intermediate is the Cys417. The Glycine radical domain maps to 645-774 (SPGANPSNKA…LTERVFHEVL (130 aa)). At Gly749 the chain carries Glycine radical.

It belongs to the glycyl radical enzyme (GRE) family. PFL subfamily. In terms of assembly, homodimer.

Its subcellular location is the cytoplasm. The catalysed reaction is formate + acetyl-CoA = pyruvate + CoA. The protein operates within fermentation; pyruvate fermentation; formate from pyruvate: step 1/1. This Lactococcus lactis subsp. lactis (strain IL1403) (Streptococcus lactis) protein is Formate acetyltransferase (pfl).